The primary structure comprises 167 residues: Stress-related protein (167 aa).

This sequence belongs to the REF/SRPP family.

Plays a role in plant defense. This chain is Stress-related protein (SRP), found in Phaseolus vulgaris (Kidney bean).